The chain runs to 244 residues: Claudin-12 (244 aa).

Over M1–T10 the chain is Cytoplasmic. A helical transmembrane segment spans residues V11–P31. The Extracellular segment spans residues N32–Q87. A helical transmembrane segment spans residues F88–M108. Topologically, residues C109 to V135 are cytoplasmic. Residues A136–F156 form a helical membrane-spanning segment. Residues Y157–A174 lie on the Extracellular side of the membrane. Residues V175–W195 form a helical membrane-spanning segment. The Cytoplasmic portion of the chain corresponds to Y196–T244. Phosphoserine is present on residues S228 and S231.

This sequence belongs to the claudin family. Interacts with OCLN.

The protein resides in the cell junction. Its subcellular location is the tight junction. It localises to the cell membrane. Plays a major role in tight junction-specific obliteration of the intercellular space, through calcium-independent cell-adhesion activity. This is Claudin-12 (CLDN12) from Bos taurus (Bovine).